Here is a 217-residue protein sequence, read N- to C-terminus: 3,4-dihydroxy-2-butanone 4-phosphate synthase (217 aa).

D-ribulose 5-phosphate is bound by residues 37–38, Asp-42, 150–154, and Glu-174; these read RE and RRGHT. Mg(2+) is bound at residue Glu-38. Residue His-153 participates in Mg(2+) binding.

This sequence belongs to the DHBP synthase family. As to quaternary structure, homodimer. Mg(2+) serves as cofactor. Requires Mn(2+) as cofactor.

The catalysed reaction is D-ribulose 5-phosphate = (2S)-2-hydroxy-3-oxobutyl phosphate + formate + H(+). Its pathway is cofactor biosynthesis; riboflavin biosynthesis; 2-hydroxy-3-oxobutyl phosphate from D-ribulose 5-phosphate: step 1/1. Its function is as follows. Catalyzes the conversion of D-ribulose 5-phosphate to formate and 3,4-dihydroxy-2-butanone 4-phosphate. The chain is 3,4-dihydroxy-2-butanone 4-phosphate synthase from Shewanella oneidensis (strain ATCC 700550 / JCM 31522 / CIP 106686 / LMG 19005 / NCIMB 14063 / MR-1).